Here is a 113-residue protein sequence, read N- to C-terminus: MNTVRVTFLLVFVLAVSLGQADKDENRMEMQEKTEQGNSYLDFAENLPLQKLEELEAKLLEEDSEESRNSRQKRCIGEGVPCDENDPRCCSGLVCLKPTLHGIWYKSYYCYKK.

Residues 1-21 (MNTVRVTFLLVFVLAVSLGQA) form the signal peptide. The propeptide occupies 22–74 (DKDENRMEMQEKTEQGNSYLDFAENLPLQKLEELEAKLLEEDSEESRNSRQKR). Over residues 60–69 (LEEDSEESRN) the composition is skewed to basic and acidic residues. The interval 60–83 (LEEDSEESRNSRQKRCIGEGVPCD) is disordered. 3 disulfides stabilise this stretch: Cys-75-Cys-90, Cys-82-Cys-95, and Cys-89-Cys-110.

It belongs to the neurotoxin 14 (magi-1) family. 01 (HNTX-16) subfamily. In terms of tissue distribution, expressed by the venom gland.

The protein localises to the secreted. Functionally, probable ion channel inhibitor. The protein is U11-theraphotoxin-Hhn1a of Cyriopagopus hainanus (Chinese bird spider).